The following is a 351-amino-acid chain: Quinolinate phosphoribosyltransferase [decarboxylating] 2a, mitochondrial (351 aa).

Substrate is bound by residues R142, 173-175 (TRK), R197, K207, E240, D267, 299-301 (SGN), and 320-322 (SGA).

This sequence belongs to the NadC/ModD family. As to expression, expressed in roots and flowers.

The protein resides in the mitochondrion. It carries out the reaction nicotinate beta-D-ribonucleotide + CO2 + diphosphate = quinolinate + 5-phospho-alpha-D-ribose 1-diphosphate + 2 H(+). The protein operates within alkaloid biosynthesis; nicotine biosynthesis. It functions in the pathway cofactor biosynthesis; NAD(+) biosynthesis; nicotinate D-ribonucleotide from quinolinate: step 1/1. Functionally, involved in the biosynthesis of pyridine alkaloid natural products, leading mainly to the production of anabasine, anatabine, nicotine and nornicotine, effective deterrents against herbivores with antiparasitic and pesticide properties (neurotoxins); nornicotine serves as the precursor in the synthesis of the carcinogen compound N'-nitrosonornicotine (NNN). Involved in the catabolism of quinolinic acid (QA). The protein is Quinolinate phosphoribosyltransferase [decarboxylating] 2a, mitochondrial of Nicotiana tabacum (Common tobacco).